A 355-amino-acid chain; its full sequence is MIERFMRNDKDRPSARDGQQNGTNDDSYFVKFLHWIITLDTYDGSSRNYGRMTETTNYTFFFGGRVRTVTKTSVYSIVVFAMFIVPLILFSIFECNYLWHHKGTNWKPAIVILYYFYLLTICSFLRAACSDPGIVPRNVHIPDLNASYKIPQEYYNYAILPTKNPNASVSMKYCQTCRIWRPPRSAHCSVCDVCVLSHDHHCKWLNNCIGKRNYRFFLEFLMASTISCILLILLSSFRLSYSPQVRYTPVSLLIICYCGLGIWYPLILFIYHIFLAGTQQTTHEYLRSIGSKHPIFHKITRNRDSPYDRNSMFFNLIHLWFQERGWNLVDPRRKQHYPADIRFRKLPEAHSFETV.

Residues 1–15 are compositionally biased toward basic and acidic residues; sequence MIERFMRNDKDRPSA. The tract at residues 1-23 is disordered; sequence MIERFMRNDKDRPSARDGQQNGT. Residues 1–72 are Cytoplasmic-facing; it reads MIERFMRNDK…GGRVRTVTKT (72 aa). Residues 73-93 traverse the membrane as a helical segment; the sequence is SVYSIVVFAMFIVPLILFSIF. The Lumenal portion of the chain corresponds to 94–108; sequence ECNYLWHHKGTNWKP. The chain crosses the membrane as a helical span at residues 109–129; the sequence is AIVILYYFYLLTICSFLRAAC. At 130–215 the chain is on the cytoplasmic side; the sequence is SDPGIVPRNV…NNCIGKRNYR (86 aa). A DHHC domain is found at 172-222; it reads KYCQTCRIWRPPRSAHCSVCDVCVLSHDHHCKWLNNCIGKRNYRFFLEFLM. The active-site S-palmitoyl cysteine intermediate is the C202. A helical membrane pass occupies residues 216 to 236; the sequence is FFLEFLMASTISCILLILLSS. Residues 237–249 lie on the Lumenal side of the membrane; it reads FRLSYSPQVRYTP. The helical transmembrane segment at 250 to 270 threads the bilayer; the sequence is VSLLIICYCGLGIWYPLILFI. The Cytoplasmic portion of the chain corresponds to 271-355; the sequence is YHIFLAGTQQ…LPEAHSFETV (85 aa).

This sequence belongs to the DHHC palmitoyltransferase family. ERF2/ZDHHC9 subfamily. As to quaternary structure, interacts with ERF4. In terms of processing, autopalmitoylated.

It localises to the endoplasmic reticulum membrane. It carries out the reaction L-cysteinyl-[protein] + hexadecanoyl-CoA = S-hexadecanoyl-L-cysteinyl-[protein] + CoA. The ERF2-ERF4 complex is a palmitoyltransferase specific for Ras proteins. The chain is Palmitoyltransferase ERF2 (ERF2) from Kluyveromyces lactis (strain ATCC 8585 / CBS 2359 / DSM 70799 / NBRC 1267 / NRRL Y-1140 / WM37) (Yeast).